Here is a 348-residue protein sequence, read N- to C-terminus: Glycerol-1-phosphate dehydrogenase [NAD(P)+] (348 aa).

NAD(+)-binding positions include 94–98 and 116–119; these read GKVID and TTAS. A substrate-binding site is contributed by Asp-121. Ser-125 is an NAD(+) binding site. Asp-168 serves as a coordination point for substrate. Positions 168 and 248 each coordinate Zn(2+). Residue His-252 coordinates substrate. His-264 serves as a coordination point for Zn(2+).

Belongs to the glycerol-1-phosphate dehydrogenase family. Homooctamer. Zn(2+) serves as cofactor.

It localises to the cytoplasm. It carries out the reaction sn-glycerol 1-phosphate + NAD(+) = dihydroxyacetone phosphate + NADH + H(+). The catalysed reaction is sn-glycerol 1-phosphate + NADP(+) = dihydroxyacetone phosphate + NADPH + H(+). The protein operates within membrane lipid metabolism; glycerophospholipid metabolism. In terms of biological role, catalyzes the NAD(P)H-dependent reduction of dihydroxyacetonephosphate (DHAP or glycerone phosphate) to glycerol 1-phosphate (G1P). The G1P thus generated is used as the glycerophosphate backbone of phospholipids in the cellular membranes of Archaea. This Methanobrevibacter smithii (strain ATCC 35061 / DSM 861 / OCM 144 / PS) protein is Glycerol-1-phosphate dehydrogenase [NAD(P)+].